Reading from the N-terminus, the 433-residue chain is Arrestin domain-containing protein 1 (433 aa).

2 disordered regions span residues 296–322 (GLGL…AEAA) and 349–372 (LSSV…PLHP). Residues 301–312 (PGAPPLVVPSAP) are compositionally biased toward pro residues. 2 short sequence motifs (PPxY motif) span residues 402–405 (PPEY) and 415–418 (PPSY).

It belongs to the arrestin family. As to quaternary structure, interacts (via PPxY motifs) with ITCH (via WW domains); the interaction is direct and participates in the recruitment of the ubiquitin-protein ligase ITCH to the NOTCH1 receptor. Interacts with ARRB1 and ARRB2; the interaction is direct. Interacts with TSG101; may recruit TSG101 to the plasma membrane. Interacts (via PPxY motifs) with WWP2 (via WW domains); ubiquitinates ARRDC1. Interacts with SLC11A2; controls the incorporation of SLC11A2 into extracellular vesicles through an ubiquitination-dependent mechanism. Interacts with WWP1 (via WW domains). Interacts with NEDD4 (via WW domains). Interacts with PDCD6IP. In terms of processing, ubiquitinated. Ubiquitination by WWP2; promotes localization to extracellular microvesicles. Ubiquitinated by WWP1.

The protein resides in the cell membrane. Functionally, functions as an adapter recruiting ubiquitin-protein ligases to their specific substrates. Through an ubiquitination-dependent mechanism plays for instance a role in the incorporation of SLC11A2 into extracellular vesicles. More generally, plays a role in the extracellular transport of proteins between cells through the release in the extracellular space of microvesicles. By participating in the ITCH-mediated ubiquitination and subsequent degradation of NOTCH1, negatively regulates the NOTCH signaling pathway. This Homo sapiens (Human) protein is Arrestin domain-containing protein 1.